A 296-amino-acid chain; its full sequence is MNKEQLEKMKNGKGFIAALDQSGGSTPKALKEYGVNEDQYSNEDEMFQLVHDMRTRVVTSPSFSPDKILGAILFEQTMDREVESKYTADYLADKGVVPFLKVDKGLAEEQNGVQLMKPIDNLDNLLDRANERHIFGTKMRSNILELNEQGIKDVVEQQFEVAKQIIAKGLVPIIEPEVNINAKDKAEIEKVLKAELKKGLDSLNADQLVMLKLTIPTEPNLYKELAEHPNVVRVVVLSGGYSREKANELLKDNAELIASFSRALASDLRADQSKEEFDKALGDAVESIYDASVNKN.

The Proton acceptor role is filled by glutamate 175. Residue lysine 212 is the Schiff-base intermediate with dihydroxyacetone-P of the active site.

The protein belongs to the class I fructose-bisphosphate aldolase family.

The catalysed reaction is beta-D-fructose 1,6-bisphosphate = D-glyceraldehyde 3-phosphate + dihydroxyacetone phosphate. The protein operates within carbohydrate degradation; glycolysis; D-glyceraldehyde 3-phosphate and glycerone phosphate from D-glucose: step 4/4. This is Fructose-bisphosphate aldolase class 1 from Staphylococcus aureus (strain USA300).